The sequence spans 318 residues: Homoserine kinase (318 aa).

97–107 serves as a coordination point for ATP; sequence PIGSGLGSSAC.

Belongs to the GHMP kinase family. Homoserine kinase subfamily.

The protein resides in the cytoplasm. It catalyses the reaction L-homoserine + ATP = O-phospho-L-homoserine + ADP + H(+). The protein operates within amino-acid biosynthesis; L-threonine biosynthesis; L-threonine from L-aspartate: step 4/5. Catalyzes the ATP-dependent phosphorylation of L-homoserine to L-homoserine phosphate. In Vibrio parahaemolyticus serotype O3:K6 (strain RIMD 2210633), this protein is Homoserine kinase.